We begin with the raw amino-acid sequence, 157 residues long: Holo-[acyl-carrier-protein] synthase (157 aa).

Mg(2+)-binding residues include Asp8 and Glu59.

This sequence belongs to the P-Pant transferase superfamily. AcpS family. Mg(2+) is required as a cofactor.

The protein localises to the cytoplasm. It carries out the reaction apo-[ACP] + CoA = holo-[ACP] + adenosine 3',5'-bisphosphate + H(+). Its function is as follows. Transfers the 4'-phosphopantetheine moiety from coenzyme A to a Ser of acyl-carrier-protein. The sequence is that of Holo-[acyl-carrier-protein] synthase from Gluconobacter oxydans (strain 621H) (Gluconobacter suboxydans).